A 158-amino-acid chain; its full sequence is Small ribosomal subunit protein uS9 (158 aa).

Belongs to the universal ribosomal protein uS9 family.

In Nitrobacter winogradskyi (strain ATCC 25391 / DSM 10237 / CIP 104748 / NCIMB 11846 / Nb-255), this protein is Small ribosomal subunit protein uS9.